Reading from the N-terminus, the 282-residue chain is Plant cysteine oxidase 3 (282 aa).

Fe cation contacts are provided by His131, His133, and His202.

This sequence belongs to the cysteine dioxygenase family. Fe(2+) is required as a cofactor.

The protein resides in the nucleus. It is found in the cytoplasm. The enzyme catalyses L-cysteine + O2 = 3-sulfino-L-alanine + H(+). Catalyzes the oxidation of N-terminal cysteine residues (N-Cys), thus preparing the protein for N-end rule pathway-mediated proteasomal degradation, upstream of the N-end rule enzymes ATE1, ATE2 and PRT6. Controls the preparation of the group VII ethylene response factor (ERF-VII) proteins for degradation via the 26S proteasome N-end rule pathway. Acts as an oxygen sensor that controls the stability of ERF-VII proteins, which are stabilized in flooding-induced hypoxia, and regulate transcriptional adaptation to these adverse conditions. The protein is Plant cysteine oxidase 3 of Arabidopsis thaliana (Mouse-ear cress).